A 918-amino-acid polypeptide reads, in one-letter code: Aconitase-ribosomal protein bL21m fusion protein (918 aa).

Residues 1 to 30 constitute a mitochondrion transit peptide; that stretch reads MATFARMKLCLSGSSQAIPSKGISLVAARF. The homocitrate dehydratase, mitochondrial stretch occupies residues 31–811; that stretch reads QSTASRASYV…IDSIKQQPDH (781 aa). Residues Q105 and 198–200 contribute to the substrate site; that span reads DSH. [4Fe-4S] cluster contacts are provided by C394, C457, and C460. Substrate is bound by residues R484, R489, K619, and 680–681; that span reads AR. A large ribosomal subunit protein bL21m region spans residues 812–918; that stretch reads YADAYIFNRH…ILRVTELKLN (107 aa).

It in the N-terminal section; belongs to the aconitase/IPM isomerase family. The protein in the C-terminal section; belongs to the bacterial ribosomal protein bL21 family. In terms of assembly, component of the mitochondrial large ribosomal subunit (mt-LSU). Mature yeast 74S mitochondrial ribosomes consist of a small (37S) and a large (54S) subunit. The 37S small subunit contains a 15S ribosomal RNA (15S mt-rRNA) and at least 32 different proteins. The 54S large subunit contains a 21S rRNA (21S mt-rRNA) and at least 45 different proteins. The cofactor is [4Fe-4S] cluster.

It is found in the mitochondrion. The protein localises to the nucleus. The catalysed reaction is (2R)-homocitrate = cis-homoaconitate + H2O. The protein operates within amino-acid biosynthesis; L-lysine biosynthesis via AAA pathway; L-alpha-aminoadipate from 2-oxoglutarate: step 2/5. In terms of biological role, catalyzes the reversible dehydration of (R)-homocitrate to cis-homoaconitate, a step in the alpha-aminoadipate pathway for lysine biosynthesis. Functionally, component of the mitochondrial ribosome (mitoribosome), a dedicated translation machinery responsible for the synthesis of mitochondrial genome-encoded proteins, including at least some of the essential transmembrane subunits of the mitochondrial respiratory chain. The mitoribosomes are attached to the mitochondrial inner membrane and translation products are cotranslationally integrated into the membrane. This is Aconitase-ribosomal protein bL21m fusion protein (aco2) from Schizosaccharomyces pombe (strain 972 / ATCC 24843) (Fission yeast).